Consider the following 273-residue polypeptide: MEPKRSRLVVCAPEPSHAREFPDVAVFSGGRANASQAERLARAVGRVLADRGVTGGARVRLTMANCADGPTLVQINLQVGDTPLRAQAATAGIDDLRPALIRLDRQIVRASAQWCPRPWPDRPRRRLTTPAEALVTRRKPVVLRRATPLQAIAAMDAMDYDVHLFTDAETGEDAVVYRAGPSGLRLARQHHVFPPGWSRCRAPAGPPVPLIVNSRPTPVLTEAAAVDRAREHGLPFLFFTDQATGRGQLLYSRYDGNLGLITPTGDGVADGLA.

In terms of assembly, interacts with human TLR2.

Functionally, involved in translation regulation. Can also stimulate macrophages and peripheral blood mononuclear cells (PBMC) to secrete important cytokines that may be significant in granuloma formation and its maintenance. Increases secretion of IFN-gamma, TNF-alpha, IL-1 beta and IL-8 through human Toll-like receptor 2 (TLR2) signaling pathway. This is Dormancy associated translation inhibitor from Mycobacterium tuberculosis (strain CDC 1551 / Oshkosh).